An 82-amino-acid polypeptide reads, in one-letter code: MGMSKSIKVILSLALVVFLALAGTKVEASVRYITYPAIDRGDHAVHCDKAHPNTCKKKQANPYRRGCGVLEGCHRETGPKPT.

The N-terminal stretch at 1 to 28 is a signal peptide; it reads MGMSKSIKVILSLALVVFLALAGTKVEA. Intrachain disulfides connect cysteine 47–cysteine 55 and cysteine 67–cysteine 73.

This sequence belongs to the plant rapid alkalinization factor (RALF) family. As to expression, expressed in leaves and flowers.

It localises to the secreted. In terms of biological role, cell signaling peptide that may regulate plant stress, growth, and development. Mediates a rapid alkalinization of extracellular space by mediating a transient increase in the cytoplasmic Ca(2+) concentration leading to a calcium-dependent signaling events through a cell surface receptor and a concomitant activation of some intracellular mitogen-activated protein kinases. The chain is Protein RALF-like 8 (RALFL8) from Arabidopsis thaliana (Mouse-ear cress).